The following is a 309-amino-acid chain: Homoserine kinase (309 aa).

ATP is bound at residue Pro-91–Cys-101.

It belongs to the GHMP kinase family. Homoserine kinase subfamily.

The protein resides in the cytoplasm. It catalyses the reaction L-homoserine + ATP = O-phospho-L-homoserine + ADP + H(+). Its pathway is amino-acid biosynthesis; L-threonine biosynthesis; L-threonine from L-aspartate: step 4/5. Its function is as follows. Catalyzes the ATP-dependent phosphorylation of L-homoserine to L-homoserine phosphate. The chain is Homoserine kinase from Salmonella arizonae (strain ATCC BAA-731 / CDC346-86 / RSK2980).